We begin with the raw amino-acid sequence, 374 residues long: Fasciclin-like arabinogalactan protein CTB11 (374 aa).

Residues 1-18 (MHFPALAVAGCLLSRATA) form the signal peptide. FAS1 domains follow at residues 19–171 (QSLD…DANM) and 173–302 (LPHN…DGAL). Asn-52, Asn-72, Asn-120, Asn-132, and Asn-176 each carry an N-linked (GlcNAc...) asparagine glycan. The helical transmembrane segment at 328–348 (ILASHQLTLLAVLAMALVSIL) threads the bilayer.

Belongs to the fasciclin-like AGP family.

The protein localises to the membrane. Its pathway is mycotoxin biosynthesis. Fasciclin-like arabinogalactan protein; part of the gene cluster that mediates the biosynthesis of cercosporin, a light-activated, non-host-selective toxin. The perylenequinone chromophore of cercosporin absorbs light energy to attain an electronically-activated triplet state and produces active oxygen species such as the hydroxyl radical, superoxide, hydrogen peroxide or singlet oxygen upon reaction with oxygen molecules. These reactive oxygen species cause damage to various cellular components including lipids, proteins and nucleic acids. The first step of cercosporin biosynthesis is performed by the polyketide synthase CTB1 which catalyzes the formation of nor-toralactone. The starter unit acyltransferase (SAT) domain of CTB1 initiates polyketide extension by the selective utilization of acetyl-CoA, which is elongated to the heptaketide in the beta-ketoacyl synthase (KS) domain by successive condensations with six malonyl units introduced by the malonyl acyltransferase (MAT) domain. The product template (PT) domain catalyzes C4-C9 and C2-C11 aldol cyclizations and dehydrations to a trihydroxynaphthalene, which is thought to be delivered to the thioesterase (TE) domain for product release. The bifunctional enzyme CTB3 then methylates nor-toralactone to toralactone before conducting an unusual oxidative aromatic ring opening. The O-methyltransferase CTB2 further methylates the nascent OH-6 of the CBT3 product, blocking further oxidation at this site before the reductase CTB6 reduces the 2-oxopropyl ketone at position C7, giving naphthalene. The FAD-dependent monooxygenase CTB5 in concert with the multicopper oxidase CTB12 are responsible for homodimerization of naphthalene with CTB7 installing the dioxepine moiety, finally producing cercosporin. The fasciclin domain-containing protein CTB11 might act with CTB5 and CTB12 whereas the roles of CTB9 and CTB10 have still to be elucidated. This is Fasciclin-like arabinogalactan protein CTB11 from Cercospora beticola (Sugarbeet leaf spot fungus).